The chain runs to 332 residues: Glyceraldehyde-3-phosphate dehydrogenase 1 (332 aa).

NAD(+) contacts are provided by residues 11-12, aspartate 32, and arginine 77; that span reads RI. D-glyceraldehyde 3-phosphate is bound by residues 148–150, threonine 179, 208–209, and arginine 231; these read SCT and TG. Cysteine 149 acts as the Nucleophile in catalysis. Asparagine 313 is an NAD(+) binding site.

The protein belongs to the glyceraldehyde-3-phosphate dehydrogenase family. As to quaternary structure, homotetramer.

It is found in the cytoplasm. The enzyme catalyses D-glyceraldehyde 3-phosphate + phosphate + NAD(+) = (2R)-3-phospho-glyceroyl phosphate + NADH + H(+). The protein operates within carbohydrate degradation; glycolysis; pyruvate from D-glyceraldehyde 3-phosphate: step 1/5. The sequence is that of Glyceraldehyde-3-phosphate dehydrogenase 1 (Gapdh1) from Drosophila melanogaster (Fruit fly).